A 152-amino-acid polypeptide reads, in one-letter code: Deoxyuridine 5'-triphosphate nucleotidohydrolase (152 aa).

Substrate is bound by residues 71 to 73, Asn-84, 88 to 90, and Met-98; these read RSG and LID.

The protein belongs to the dUTPase family. Mg(2+) is required as a cofactor.

It carries out the reaction dUTP + H2O = dUMP + diphosphate + H(+). The protein operates within pyrimidine metabolism; dUMP biosynthesis; dUMP from dCTP (dUTP route): step 2/2. In terms of biological role, this enzyme is involved in nucleotide metabolism: it produces dUMP, the immediate precursor of thymidine nucleotides and it decreases the intracellular concentration of dUTP so that uracil cannot be incorporated into DNA. This chain is Deoxyuridine 5'-triphosphate nucleotidohydrolase, found in Klebsiella pneumoniae subsp. pneumoniae (strain ATCC 700721 / MGH 78578).